The sequence spans 293 residues: Urease accessory protein UreD 2 (293 aa).

It belongs to the UreD family. UreD, UreF and UreG form a complex that acts as a GTP-hydrolysis-dependent molecular chaperone, activating the urease apoprotein by helping to assemble the nickel containing metallocenter of UreC. The UreE protein probably delivers the nickel.

The protein localises to the cytoplasm. Functionally, required for maturation of urease via the functional incorporation of the urease nickel metallocenter. The polypeptide is Urease accessory protein UreD 2 (Streptomyces griseus subsp. griseus (strain JCM 4626 / CBS 651.72 / NBRC 13350 / KCC S-0626 / ISP 5235)).